Here is a 368-residue protein sequence, read N- to C-terminus: Flagellar P-ring protein (368 aa).

Positions Met-1–Ala-22 are cleaved as a signal peptide.

It belongs to the FlgI family. In terms of assembly, the basal body constitutes a major portion of the flagellar organelle and consists of four rings (L,P,S, and M) mounted on a central rod.

It is found in the periplasm. The protein resides in the bacterial flagellum basal body. Functionally, assembles around the rod to form the L-ring and probably protects the motor/basal body from shearing forces during rotation. This chain is Flagellar P-ring protein, found in Bordetella bronchiseptica (strain ATCC BAA-588 / NCTC 13252 / RB50) (Alcaligenes bronchisepticus).